A 140-amino-acid chain; its full sequence is ATP synthase epsilon chain (140 aa).

It belongs to the ATPase epsilon chain family. In terms of assembly, F-type ATPases have 2 components, CF(1) - the catalytic core - and CF(0) - the membrane proton channel. CF(1) has five subunits: alpha(3), beta(3), gamma(1), delta(1), epsilon(1). CF(0) has three main subunits: a, b and c.

It is found in the cell inner membrane. Produces ATP from ADP in the presence of a proton gradient across the membrane. The chain is ATP synthase epsilon chain from Laribacter hongkongensis (strain HLHK9).